The sequence spans 367 residues: Homeobox protein Nkx-6.1 (367 aa).

The disordered stretch occupies residues 36-133 (YPAAYPPLPA…SSSSSSSASA (98 aa)). Composition is skewed to low complexity over residues 48 to 59 (PSSSSSSSSSSS), 78 to 91 (GGLS…QQLS), and 110 to 133 (ASGA…SASA). Residues 102–268 (LSRPSMPVAS…KYLAGPERAR (167 aa)) form a repressor domain region. Arginine 189 is modified (asymmetric dimethylarginine). The homeobox DNA-binding region spans 236–295 (RKHTRPTFSGQQIFALEKTFEQTKYLAGPERARLAYSLGMTESQVKVWFQNRRTKWRKKH). The tract at residues 294–367 (KHAAEMATAK…LHASEPESSS (74 aa)) is disordered. The span at 304 to 317 (KKQDSETERLKGAS) shows a compositional bias: basic and acidic residues. The involved in DNA-binding stretch occupies residues 306–367 (QDSETERLKG…LHASEPESSS (62 aa)).

In terms of tissue distribution, pancreatic beta cells.

The protein resides in the nucleus. In terms of biological role, transcription factor which binds to specific A/T-rich DNA sequences in the promoter regions of a number of genes. Involved in the development of insulin-producing beta cells in the islets of Langerhans at the secondary transition. Together with NKX2-2 and IRX3 acts to restrict the generation of motor neurons to the appropriate region of the neural tube. Belongs to the class II proteins of neuronal progenitor factors, which are induced by SHH signals. The protein is Homeobox protein Nkx-6.1 (NKX6-1) of Homo sapiens (Human).